The chain runs to 201 residues: Recombination protein RecR (201 aa).

A C4-type zinc finger spans residues 56–71 (CKICFNVSSDEVCQYC). Positions 79 to 174 (SMICVVEESK…TVSRLASGLP (96 aa)) constitute a Toprim domain.

It belongs to the RecR family.

Its function is as follows. May play a role in DNA repair. It seems to be involved in an RecBC-independent recombinational process of DNA repair. It may act with RecF and RecO. In Cutibacterium acnes (strain DSM 16379 / KPA171202) (Propionibacterium acnes), this protein is Recombination protein RecR.